The following is a 254-amino-acid chain: Rho-related protein racD (254 aa).

15–22 (GDGAVGKT) serves as a coordination point for GTP. The Effector region signature appears at 37 to 45 (YVPTVFDNF). GTP contacts are provided by residues 62–66 (DTAGQ) and 120–123 (TKTD). Positions 186–231 (AVTSPTSKSSGKSSPSSTSSKPSKTTTTTTTSSSSSSPPAASTAKP) are enriched in low complexity. The tract at residues 186–254 (AVTSPTSKSS…KDKDEKKPAK (69 aa)) is disordered. Over residues 232–254 (AGEKKLSWGLFRKKDKDEKKPAK) the composition is skewed to basic and acidic residues.

It belongs to the small GTPase superfamily. Rho family.

In Dictyostelium discoideum (Social amoeba), this protein is Rho-related protein racD (racD).